Consider the following 213-residue polypeptide: MSMSYQLKTKKLACQRGDNVLFTDFNFVWNSGDFVQIEGHNGIGKTSLLRILIGLAQQREGEVFWNGIPIQTQRETFQYDLLYLGHHSGIKPELTAWENLKFYQQMSACELGEDKLWQVLETVGLLGREDIPAAQLSAGQQRRIALARLWLSKAPLWILDEPFTAIDKHGVQVLTTLFEQHATQGGIVIFTSHQDVQSRLLKKVRLENYKFTE.

The ABC transporter domain occupies 7–213; it reads LKTKKLACQR…VRLENYKFTE (207 aa). 39–46 is an ATP binding site; the sequence is GHNGIGKT.

The protein belongs to the ABC transporter superfamily. CcmA exporter (TC 3.A.1.107) family. As to quaternary structure, the complex is composed of two ATP-binding proteins (CcmA) and two transmembrane proteins (CcmB).

Its subcellular location is the cell inner membrane. It carries out the reaction heme b(in) + ATP + H2O = heme b(out) + ADP + phosphate + H(+). Its function is as follows. Part of the ABC transporter complex CcmAB involved in the biogenesis of c-type cytochromes; once thought to export heme, this seems not to be the case, but its exact role is uncertain. Responsible for energy coupling to the transport system. This Pasteurella multocida (strain Pm70) protein is Cytochrome c biogenesis ATP-binding export protein CcmA.